Consider the following 371-residue polypeptide: Vasopressin V2 receptor (371 aa).

Positions 1–30 (MLMASTTSAVPGHPSLPSLPSNSSQERPLD) are disordered. The Extracellular segment spans residues 1–38 (MLMASTTSAVPGHPSLPSLPSNSSQERPLDTRDPLLAR). Residues 15–24 (SLPSLPSNSS) show a composition bias toward low complexity. A glycan (N-linked (GlcNAc...) asparagine) is linked at N22. Residues 39–63 (AELALLSIVFVAVALSNGLVLAALA) form a helical membrane-spanning segment. Residues 64–77 (RRGRRGHWAPIHVF) are Cytoplasmic-facing. A helical transmembrane segment spans residues 78 to 98 (IGHLCLADLAVALFQVLPQLA). At 99–113 (WKATDRFRGPDALCR) the chain is on the extracellular side. Residues 114-135 (AVKYLQMVGMYASSYMILAMTL) form a helical membrane-spanning segment. Over 136 to 159 (DRHRAICRPMLAYRHGSGAHWNRP) the chain is Cytoplasmic. Residues 160 to 180 (VLVAWAFSLLLSLPQLFIFAQ) traverse the membrane as a helical segment. At 181–200 (RNVEGGSGVTDCWACFAEPW) the chain is on the extracellular side. Residues 201-220 (GRRTYVTWIALMVFVAPTLG) traverse the membrane as a helical segment. Residues 221-271 (IAACQVLIFREIHASLVPGPSERPGGRRRGRRTGSPGEGAHVSAAVAKTVR) are Cytoplasmic-facing. Residues 240 to 259 (PSERPGGRRRGRRTGSPGEG) are disordered. The chain crosses the membrane as a helical span at residues 272 to 293 (MTLVIVVVYVLCWAPFFLVQLW). The Extracellular segment spans residues 294–308 (AAWDPEAPLEGAPFV). Residues 309 to 328 (LLMLLASLNSCTNPWIYASF) form a helical membrane-spanning segment. Topologically, residues 329–371 (SSSVSSELRSLLCCARGRTPPSLGPQDESCTTASSSLAKDTSS) are cytoplasmic. 2 S-palmitoyl cysteine lipidation sites follow: C341 and C342. The interval 349-371 (PSLGPQDESCTTASSSLAKDTSS) is disordered. A compositionally biased stretch (polar residues) spans 356–371 (ESCTTASSSLAKDTSS).

Belongs to the G-protein coupled receptor 1 family. Vasopressin/oxytocin receptor subfamily. In terms of assembly, interacts with ARRDC4. Identified in a complex containing at least ARRDC4, V2R and HGS. Interacts with TMEM147. In terms of tissue distribution, kidney.

Its subcellular location is the cell membrane. Functionally, receptor for arginine vasopressin. The activity of this receptor is mediated by G proteins which activate adenylate cyclase. Involved in renal water reabsorption. The polypeptide is Vasopressin V2 receptor (AVPR2) (Homo sapiens (Human)).